Here is a 309-residue protein sequence, read N- to C-terminus: D-alanine--D-alanine ligase (309 aa).

In terms of domain architecture, ATP-grasp spans Lys-99–Asp-304. Leu-132–Thr-187 lines the ATP pocket. 3 residues coordinate Mg(2+): Asp-258, Glu-271, and Asn-273.

This sequence belongs to the D-alanine--D-alanine ligase family. Requires Mg(2+) as cofactor. It depends on Mn(2+) as a cofactor.

The protein localises to the cytoplasm. It catalyses the reaction 2 D-alanine + ATP = D-alanyl-D-alanine + ADP + phosphate + H(+). Its pathway is cell wall biogenesis; peptidoglycan biosynthesis. Cell wall formation. This chain is D-alanine--D-alanine ligase, found in Moorella thermoacetica (strain ATCC 39073 / JCM 9320).